We begin with the raw amino-acid sequence, 287 residues long: Nucleotide-binding protein VV0445 (287 aa).

8–15 serves as a coordination point for ATP; that stretch reads GHSGAGKS. A GTP-binding site is contributed by 56-59; the sequence is DVRN.

Belongs to the RapZ-like family.

In terms of biological role, displays ATPase and GTPase activities. The sequence is that of Nucleotide-binding protein VV0445 from Vibrio vulnificus (strain YJ016).